A 470-amino-acid chain; its full sequence is AAA-ATPase At5g17730 (470 aa).

The signal sequence occupies residues 1–18 (MFSLRNLPSLAPFVSAYA). 252-259 (GPPGTGKT) contributes to the ATP binding site.

The protein belongs to the AAA ATPase family. BCS1 subfamily. Mg(2+) serves as cofactor.

The enzyme catalyses ATP + H2O = ADP + phosphate + H(+). This chain is AAA-ATPase At5g17730, found in Arabidopsis thaliana (Mouse-ear cress).